The following is a 434-amino-acid chain: MDEGGGIGSSLLSRITTTASEIMMRNEPTTTENPAVQEMNHIYHLTPSMKMLCILFYSILCVCCVYGNVLVILVIVYFKRLRTATNILILNLAVADLLISVFCIPFSYWQVLIYDDQRWLFGSMMCSLLAFLQAMAVFLSAWTLVVISFDRWMAIMFLLTPNIRITRRRALYLVAATWIFSILMALPLLFTTRFFEDQDGLPNCGENWTYFGDSGEQVRKVYSSMVLILQYVVPQAVLIITYTHIGIKMWNSRVPGMQNGATKKMIVDRHESVKKLVPMVILISALFALCWLPLLILINVIPEFYPDINSWGYILYLWWFAHGLAMSHSMVNPIIYFIRNARFREGFCFFSSKLLPCISFKELRLLTDNTSRSFRNRSRFSGVINPTSSDEKPATSLTRYSRSGVLDRQTCRSARFFEARPLVVVRNNSANSLA.

The Extracellular portion of the chain corresponds to 1-55; the sequence is MDEGGGIGSSLLSRITTTASEIMMRNEPTTTENPAVQEMNHIYHLTPSMKMLCIL. Residues 56-76 traverse the membrane as a helical segment; sequence FYSILCVCCVYGNVLVILVIV. Residues 77–86 are Cytoplasmic-facing; sequence YFKRLRTATN. Residues 87-107 form a helical membrane-spanning segment; the sequence is ILILNLAVADLLISVFCIPFS. The Extracellular portion of the chain corresponds to 108 to 128; sequence YWQVLIYDDQRWLFGSMMCSL. The cysteines at positions 126 and 204 are disulfide-linked. Residues 129-149 form a helical membrane-spanning segment; it reads LAFLQAMAVFLSAWTLVVISF. The Cytoplasmic segment spans residues 150 to 169; it reads DRWMAIMFLLTPNIRITRRR. Residues 170–190 form a helical membrane-spanning segment; that stretch reads ALYLVAATWIFSILMALPLLF. Topologically, residues 191 to 226 are extracellular; it reads TTRFFEDQDGLPNCGENWTYFGDSGEQVRKVYSSMV. Asn207 is a glycosylation site (N-linked (GlcNAc...) asparagine). A helical membrane pass occupies residues 227-247; that stretch reads LILQYVVPQAVLIITYTHIGI. Over 248 to 277 the chain is Cytoplasmic; that stretch reads KMWNSRVPGMQNGATKKMIVDRHESVKKLV. Residues 278-298 form a helical membrane-spanning segment; the sequence is PMVILISALFALCWLPLLILI. Topologically, residues 299-310 are extracellular; it reads NVIPEFYPDINS. Residues 311 to 331 traverse the membrane as a helical segment; sequence WGYILYLWWFAHGLAMSHSMV. Residues 332 to 434 are Cytoplasmic-facing; that stretch reads NPIIYFIRNA…VRNNSANSLA (103 aa).

It belongs to the G-protein coupled receptor 1 family. Expressed in many cells, mainly in the head region, with expression detected in the head muscles, I2 neurons, MC neurons, RIH neuron, AIA neurons, AUA neurons, ASK neurons, ASI neurons, a few B-type motorneurons in the posterior ventral nerve cord, pharyngeal muscles, body wall muscles, the intestine and a few classes of unidentified cells anterior to the nerve ring. Expression in the MC neurons is important to mediate suppression of feeding while expression in the RIH neuron is important for the facilitation of egg-laying. No expression detected in other tissues including hypodermis.

The protein localises to the cell membrane. Its function is as follows. Receptor for the LURY-1-1 and LURY-1-2 peptides which control food-related processes including feeding, lifespan, egg-laying and roaming behavior. Receptor for flp-7 which stimulates serotonin-induced fat loss. Serotonin induces secretion of flp-7 from neurons and binding to npr-22 which leads to induction of the atgp-1 lipase and subsequent fat loss. Acts in vitro as a receptor for the flp-7 FMRFamide-like neuropeptides TPMQRSSMVRF-amide, SPMQRSSMVRF-amide, SPMERSAMVRF-amide and SPMDRSKMVRF-amide. Also acts in vitro as a receptor for a number of other FMRFamide-like neuropeptides including the flp-1 neuropeptide PNFMRY-amide, the flp-9 neuropeptide KPSFVRF-amide, the flp-11 neuropeptides AMRNALVRF-amide, ASGGMRNALVRF-amide and NGAPQPFVRF-amide, the flp-13 neuropeptides AADGAPLIRF-amide, ASPSAPLIRF-amide, SPSAVPLIRF-amide, SAAAPLIRF-amide and ASSAPLIRF-amide, and the flp-22 neuropeptide SPSAKWMRF-amide. The SPMERSAMVRF-amide neuropeptide from flp-7 acts as the strongest in vitro activator of npr-22. This is Neuropeptide receptor 22 from Caenorhabditis elegans.